We begin with the raw amino-acid sequence, 192 residues long: Peptidyl-tRNA hydrolase (192 aa).

Tyr-18 is a binding site for tRNA. Residue His-23 is the Proton acceptor of the active site. Phe-69, Asn-71, and Asn-117 together coordinate tRNA.

It belongs to the PTH family. In terms of assembly, monomer.

It localises to the cytoplasm. It carries out the reaction an N-acyl-L-alpha-aminoacyl-tRNA + H2O = an N-acyl-L-amino acid + a tRNA + H(+). Functionally, hydrolyzes ribosome-free peptidyl-tRNAs (with 1 or more amino acids incorporated), which drop off the ribosome during protein synthesis, or as a result of ribosome stalling. Its function is as follows. Catalyzes the release of premature peptidyl moieties from peptidyl-tRNA molecules trapped in stalled 50S ribosomal subunits, and thus maintains levels of free tRNAs and 50S ribosomes. This is Peptidyl-tRNA hydrolase from Neisseria meningitidis serogroup C (strain 053442).